A 411-amino-acid polypeptide reads, in one-letter code: G2/mitotic-specific cyclin cig2 (411 aa).

The Destruction box signature appears at 51–60; sequence RTVLSDVSNV. The segment at 57–89 is disordered; the sequence is VSNVGKNNADEKDTKKAKRSFDESNLSTNEEAD. Positions 64–78 are enriched in basic and acidic residues; that stretch reads NADEKDTKKAKRSFD. In terms of domain architecture, Cyclin N-terminal spans 139–265; it reads EIFEYIRKLD…MLNVLNFDLS (127 aa). Residues 181–273 are interaction with pop1; the sequence is SNFCLMPETL…LSYPSPLNFL (93 aa).

This sequence belongs to the cyclin family. Cyclin AB subfamily. In terms of assembly, associates with cdc2, res2 and rum1. Interacts with pop1 only when phosphorylated. Phosphorylated.

Its subcellular location is the nucleus. It localises to the cytoplasm. The protein resides in the cytoskeleton. It is found in the microtubule organizing center. The protein localises to the spindle pole body. Essential for the control of the cell cycle at the G2/M and G1/S (mitosis) transition. Interacts with the cdc2 protein kinase to form MPF. Interaction with res2 promotes the phosphorylation of res1 and inhibits MBF-dependent gene transcription. Forms an autoregulating feedback-inhibition loop with MBF which is important for normal regulation of the cell cycle. G2/M cyclins accumulate steadily during G2 and are abruptly destroyed at mitosis. Negatively regulates conjugation via interacting with cell cycle 'start' genes. Degraded by skp1, pop1 and pop2 in the G2 and M phases of the cell cycle. This chain is G2/mitotic-specific cyclin cig2 (cig2), found in Schizosaccharomyces pombe (strain 972 / ATCC 24843) (Fission yeast).